Reading from the N-terminus, the 466-residue chain is Glucose-6-phosphate 1-dehydrogenase 1 (466 aa).

NADP(+) is bound by residues Ser-48, 88-89, and Lys-141; that span reads DV. Substrate-binding residues include His-171, Lys-175, Glu-209, and Asp-228. His-233 functions as the Proton acceptor in the catalytic mechanism. Substrate contacts are provided by Lys-319 and Lys-324.

It belongs to the glucose-6-phosphate dehydrogenase family.

It catalyses the reaction D-glucose 6-phosphate + NADP(+) = 6-phospho-D-glucono-1,5-lactone + NADPH + H(+). The protein operates within carbohydrate degradation; pentose phosphate pathway; D-ribulose 5-phosphate from D-glucose 6-phosphate (oxidative stage): step 1/3. Functionally, catalyzes the oxidation of glucose 6-phosphate to 6-phosphogluconolactone. The protein is Glucose-6-phosphate 1-dehydrogenase 1 of Mycobacterium tuberculosis (strain ATCC 25618 / H37Rv).